A 123-amino-acid chain; its full sequence is MIGLLLVLHGSKIKEWQEIVINYAEELKRHFPLVEYGFIEINEPKIDEAAKKLVERGADTIVVVPLLFAAGMHFKRDIPNQLKETSNKAKIIIAEPIGFDKRIVDILKEKAEKALSVEGTSYQ.

His9 (proton acceptor) is an active-site residue. A Co(2+)-binding site is contributed by His9. Substrate is bound by residues Glu43 and 68–73; that span reads FAAGMH. A Co(2+)-binding site is contributed by His73.

This sequence belongs to the CbiX family. CbiXS subfamily. As to quaternary structure, homotetramer; dimer of dimers.

It carries out the reaction Co-sirohydrochlorin + 2 H(+) = sirohydrochlorin + Co(2+). The protein operates within cofactor biosynthesis; adenosylcobalamin biosynthesis; cob(II)yrinate a,c-diamide from sirohydrochlorin (anaerobic route): step 1/10. Functionally, catalyzes the insertion of Co(2+) into sirohydrochlorin as part of the anaerobic pathway to cobalamin biosynthesis. In Sulfolobus acidocaldarius (strain ATCC 33909 / DSM 639 / JCM 8929 / NBRC 15157 / NCIMB 11770), this protein is Sirohydrochlorin cobaltochelatase.